We begin with the raw amino-acid sequence, 60 residues long: Large ribosomal subunit protein uL30 (60 aa).

Belongs to the universal ribosomal protein uL30 family. Part of the 50S ribosomal subunit.

In Burkholderia ambifaria (strain MC40-6), this protein is Large ribosomal subunit protein uL30.